Here is a 506-residue protein sequence, read N- to C-terminus: Protein spinster homolog 1 (506 aa).

The interval 1–42 (MSQADADITPFFADDNEGEGPVENGVGSPLPEDEEEESPSGV) is disordered. A compositionally biased stretch (low complexity) spans 21 to 30 (PVENGVGSPL). Transmembrane regions (helical) follow at residues 52–71 (IVLCYINLLNYMDRFTVAGV), 87–107 (GLLQTVFICSYMFLAPLFGYL), 115–135 (LIMCVGIFFWSVVTLASSFIG), 149–169 (VGVGEASYSTIAPTIIADLFV), 176–196 (MLSIFYFAIPVGSGMGYIVGS), 207–227 (WALRVTPGLGLLAVFLLMLVV), 266–286 (FGFTAVAFVTGSLALWAPAFL), 310–330 (LIFGAITVVTGILGVASGVQA), 344–364 (LVCAAGLLLAAPFLYLSIMFA), 373–393 (VFIFLGETFLSMNWAIVADIL), 408–428 (FQIVLSHLLGDAISPYLIGVV), and 450–470 (LLCSFVAVAGGAFFLATAVFI).

This sequence belongs to the major facilitator superfamily. Spinster (TC 2.A.1.49) family. As to expression, expressed in yolk cells.

It is found in the lysosome membrane. It catalyses the reaction a 1-acyl-sn-glycero-3-phosphocholine(out) + H(+)(out) = a 1-acyl-sn-glycero-3-phosphocholine(in) + H(+)(in). The enzyme catalyses a 1-acyl-sn-glycero-3-phosphoethanolamine(out) + H(+)(out) = a 1-acyl-sn-glycero-3-phosphoethanolamine(in) + H(+)(in). The catalysed reaction is a 1-O-(1Z-alkenyl)-sn-glycero-3-phosphocholine(out) + H(+)(out) = a 1-O-(1Z-alkenyl)-sn-glycero-3-phosphocholine(in) + H(+)(in). It carries out the reaction a 1-O-(1Z-alkenyl)-sn-glycero-3-phosphoethanolamine(out) + H(+)(out) = a 1-O-(1Z-alkenyl)-sn-glycero-3-phosphoethanolamine(in) + H(+)(in). Its function is as follows. Mediates the rate-limiting, proton-dependent, lysosomal efflux of lysophospholipids. Selective for zwitterionic headgroups such as lysophosphatidylcholine (LPC) and lysophosphatidylethanolamine (LPE). Essential player in lysosomal homeostasis. Critical for embryogenesis. Involved in the regulation of developmental senescence. The sequence is that of Protein spinster homolog 1 (spns1) from Danio rerio (Zebrafish).